The chain runs to 483 residues: Protein EFFECTOR OF TRANSCRIPTION 2 (483 aa).

Residues 64-112 (SCPGLYELGVAVIGQEQCRKLEPDIVLASYLGQAESVRSRLQRYGRSGA) form the GIY-YIG domain. 2 Cx9Cx9RCx2HK repeats span residues 278–303 (CGVLLEDGGCCIRSPVKGRKRCIEHK) and 338–363 (CGVILPDMEPCNKRPVPGRKRCEDHK). The span at 380-396 (EKTVKDEKPDPESHTES) shows a compositional bias: basic and acidic residues. Positions 380 to 399 (EKTVKDEKPDPESHTESIEE) are disordered. 2 Cx9Cx9RCx2HK repeats span residues 406-431 (CEATTKNGLPCTRSSPKGSKRCWQHK) and 453-478 (CGVKLGNGLICERSPVKGRKRCEEHK).

In terms of tissue distribution, expressed in vascular tissues of stems, hypocotyls, leaves and flowers. Expressed in the vascular bundles of xylem in shoot parenchyma cells. Expressed in the remnant cytoplasm of differentiated fiber cells and in protoxylem element of parenchymal cells.

Its subcellular location is the cytoplasm. It localises to the nucleus. In terms of biological role, transcriptional regulator involved in the regulation of cell differentiation in meristems. Probably regulates the expression of various KNAT genes involved in the maintenance of the cells in an undifferentiated, merismastic state. Plays a role in the regulation of gibberellin 20 oxidase and the gibberellin-regulated protein GASA4. Localizes in the nucleus during the cellular differentiation state and may act via a single strand cutting domain. Transcriptional regulator required for the induction of dormancy during late seed development. Interacts genetically with FUS3 and may be component of the same regulatory pathway during embryogenesis. Binds both linear and supercoiled DNA without sequence preference. This chain is Protein EFFECTOR OF TRANSCRIPTION 2, found in Arabidopsis thaliana (Mouse-ear cress).